The primary structure comprises 613 residues: Serine/threonine-protein kinase pkpA (613 aa).

The Protein kinase domain maps to 17-269 (SKLNTVLGKG…AQEILEHRFL (253 aa)). Residues 23–31 (LGKGAYKVV) and Lys-50 contribute to the ATP site. Catalysis depends on Asp-140, which acts as the Proton acceptor. Disordered stretches follow at residues 424–475 (LQPQ…STML) and 589–613 (VTQR…QELM). Positions 427 to 441 (QPQPQPQPQPQPQPQ) are enriched in pro residues. Over residues 442-475 (PQFQLQPQLQYLSPQSTTSPGPTSDDNSTNSTML) the composition is skewed to low complexity. Residues 592 to 602 (RGLQGTRSGAS) are compositionally biased toward polar residues.

This sequence belongs to the protein kinase superfamily. Ser/Thr protein kinase family.

The enzyme catalyses L-seryl-[protein] + ATP = O-phospho-L-seryl-[protein] + ADP + H(+). It catalyses the reaction L-threonyl-[protein] + ATP = O-phospho-L-threonyl-[protein] + ADP + H(+). In terms of biological role, serine/threonine protein kinase that probably participates as an intermediate in an intracellular system controlling nuclear proliferation. The protein is Serine/threonine-protein kinase pkpA (pkpA) of Phycomyces blakesleeanus (strain ATCC 8743b / DSM 1359 / FGSC 10004 / NBRC 33097 / NRRL 1555).